The primary structure comprises 147 residues: D-aminoacyl-tRNA deacylase (147 aa).

A Gly-cisPro motif, important for rejection of L-amino acids motif is present at residues 137 to 138; that stretch reads GP.

It belongs to the DTD family. As to quaternary structure, homodimer.

The protein resides in the cytoplasm. The enzyme catalyses glycyl-tRNA(Ala) + H2O = tRNA(Ala) + glycine + H(+). The catalysed reaction is a D-aminoacyl-tRNA + H2O = a tRNA + a D-alpha-amino acid + H(+). An aminoacyl-tRNA editing enzyme that deacylates mischarged D-aminoacyl-tRNAs. Also deacylates mischarged glycyl-tRNA(Ala), protecting cells against glycine mischarging by AlaRS. Acts via tRNA-based rather than protein-based catalysis; rejects L-amino acids rather than detecting D-amino acids in the active site. By recycling D-aminoacyl-tRNA to D-amino acids and free tRNA molecules, this enzyme counteracts the toxicity associated with the formation of D-aminoacyl-tRNA entities in vivo and helps enforce protein L-homochirality. In Levilactobacillus brevis (strain ATCC 367 / BCRC 12310 / CIP 105137 / JCM 1170 / LMG 11437 / NCIMB 947 / NCTC 947) (Lactobacillus brevis), this protein is D-aminoacyl-tRNA deacylase.